Here is a 185-residue protein sequence, read N- to C-terminus: NADH-dependent FMN reductase AsuE2 (185 aa).

Low complexity predominate over residues 1 to 13 (MSTHTARRAGATA). A disordered region spans residues 1-24 (MSTHTARRAGATAGHDRDRGTEPG). The span at 14 to 24 (GHDRDRGTEPG) shows a compositional bias: basic and acidic residues.

The protein belongs to the non-flavoprotein flavin reductase family. As to quaternary structure, does not interact with AsuE1, suggesting a possible transient interaction between the two enzymes instead of formation of a stable complex.

It catalyses the reaction FMNH2 + NAD(+) = FMN + NADH + 2 H(+). It participates in antibiotic biosynthesis. In terms of biological role, involved in the biosynthesis of the antibiotic asukamycin. When flavin concentration is low, AsuE2 assists the protoasukamycin 4-monooxygenase AsuE1 by providing a reduced form of flavin, enhancing AsuE1 activity. This is NADH-dependent FMN reductase AsuE2 from Streptomyces nodosus subsp. asukaensis.